We begin with the raw amino-acid sequence, 84 residues long: Sec-independent protein translocase protein TatA (84 aa).

Residues 4–24 (MSPVHWLILAVVLLVVFGGGG) traverse the membrane as a helical segment. A disordered region spans residues 46–84 (DDESMTATDATQAPGHISPPNQNPGYSQTTSSETHRNQV). The segment covering 64-77 (PPNQNPGYSQTTSS) has biased composition (polar residues).

The protein belongs to the TatA/E family. In terms of assembly, the Tat system comprises two distinct complexes: a TatABC complex, containing multiple copies of TatA, TatB and TatC subunits, and a separate TatA complex, containing only TatA subunits. Substrates initially bind to the TatABC complex, which probably triggers association of the separate TatA complex to form the active translocon.

Its subcellular location is the cell inner membrane. Part of the twin-arginine translocation (Tat) system that transports large folded proteins containing a characteristic twin-arginine motif in their signal peptide across membranes. TatA could form the protein-conducting channel of the Tat system. The protein is Sec-independent protein translocase protein TatA of Gluconobacter oxydans (strain 621H) (Gluconobacter suboxydans).